The chain runs to 212 residues: ER lumen protein-retaining receptor 2 (212 aa).

The Lumenal portion of the chain corresponds to 1-4; it reads MNVF. A helical membrane pass occupies residues 5 to 24; the sequence is RLSGDLCHLAAIIILLLKIW. At 25 to 32 the chain is on the cytoplasmic side; it reads NSRSCAGI. Residues 33–52 form a helical membrane-spanning segment; that stretch reads SGKSQLLFAMVFTTRYLDLF. The interval 47–48 is interaction with the K-D-E-L motif on target proteins; that stretch reads RY. Residues 53–58 lie on the Lumenal side of the membrane; sequence TSFISL. Residues 59–79 traverse the membrane as a helical segment; it reads YNTSMKVIYMGCAYATVYLIY. Residues 80–92 lie on the Cytoplasmic side of the membrane; sequence MKFKATYDGNHDT. A helical transmembrane segment spans residues 93–110; that stretch reads FRVEFLVVPVGGLSVLVN. The Lumenal segment spans residues 111–116; the sequence is HDFSPL. Residues 117–135 traverse the membrane as a helical segment; it reads EILWTFSIYLESVAILPQL. The Cytoplasmic segment spans residues 136–149; that stretch reads FMISKTGEAETITT. A helical transmembrane segment spans residues 150-168; that stretch reads HYLFFLGLYRALYLFNWIW. An interaction with the K-D-E-L motif on target proteins region spans residues 159–169; sequence RALYLFNWIWR. At 169–178 the chain is on the lumenal side; the sequence is RFSFEGFFDL. Residues 179-199 form a helical membrane-spanning segment; the sequence is IAIVAGVVQTILYCDFFYLYV. At 200–212 the chain is on the cytoplasmic side; sequence TKVLKGKKLSLPA. Residues 204 to 207 are important for recycling of cargo proteins with the sequence motif K-D-E-L from the Golgi to the endoplasmic reticulum; that stretch reads KGKK.

It belongs to the ERD2 family.

Its subcellular location is the endoplasmic reticulum membrane. The protein resides in the golgi apparatus membrane. It is found in the cytoplasmic vesicle. The protein localises to the COPI-coated vesicle membrane. Its function is as follows. Receptor for the C-terminal sequence motif K-D-E-L that is present on endoplasmic reticulum resident proteins and that mediates their recycling from the Golgi back to the endoplasmic reticulum. Binding is pH dependent, and is optimal at pH 5-5.4. This is ER lumen protein-retaining receptor 2 (kdelr2) from Xenopus laevis (African clawed frog).